The chain runs to 512 residues: 2,3-bisphosphoglycerate-independent phosphoglycerate mutase (512 aa).

The Mn(2+) site is built by Asp11 and Ser61. The active-site Phosphoserine intermediate is Ser61. Substrate-binding positions include His122, Arg152 to Asp153, Arg184, Arg190, Arg259 to Arg262, and Lys332. Mn(2+) is bound by residues Asp399, His403, Asp440, His441, and His459.

It belongs to the BPG-independent phosphoglycerate mutase family. In terms of assembly, monomer. Requires Mn(2+) as cofactor.

It catalyses the reaction (2R)-2-phosphoglycerate = (2R)-3-phosphoglycerate. The protein operates within carbohydrate degradation; glycolysis; pyruvate from D-glyceraldehyde 3-phosphate: step 3/5. In terms of biological role, catalyzes the interconversion of 2-phosphoglycerate and 3-phosphoglycerate. This is 2,3-bisphosphoglycerate-independent phosphoglycerate mutase from Francisella tularensis subsp. tularensis (strain WY96-3418).